A 505-amino-acid chain; its full sequence is RNA-binding region-containing protein 3 (505 aa).

The RRM 1 domain maps to 15 to 90 (KTLIIRHLPR…RTLVVEFAKD (76 aa)). Disordered stretches follow at residues 96 to 123 (ILKD…QPSV), 193 to 236 (PPMF…EEER), 354 to 374 (AQVP…SEFI), and 486 to 505 (ARSA…GRKH). Over residues 193 to 214 (PPMFEMPSGPLPPPFPPENPPL) the composition is skewed to pro residues. Acidic residues-rich tracts occupy residues 221-235 (GSEE…DEEE) and 361-370 (EEQEEDEDIP). In terms of domain architecture, RRM 2 spans 405–488 (CRLYVKNVAK…KPLVVQFARS (84 aa)). Residues 491 to 505 (PKQESADPKKGGRKH) are compositionally biased toward basic and acidic residues.

Component of the U11/U12 snRNPs that are part of the U12-type spliceosome.

It localises to the nucleus. Participates in pre-mRNA U12-dependent splicing, performed by the minor spliceosome which removes U12-type introns. U12-type introns comprise less than 1% of all non-coding sequences. The chain is RNA-binding region-containing protein 3 from Danio rerio (Zebrafish).